Here is a 354-residue protein sequence, read N- to C-terminus: Galectin-9 (354 aa).

2 consecutive Galectin domains span residues 17–147 (FTGI…INFQ) and 226–354 (FFTS…HVQT). Residues asparagine 47, histidine 60, arginine 64, asparagine 74, 81–87 (WGPEERK), histidine 266, arginine 270, threonine 280, and 286–292 (WGPEERS) each bind a beta-D-galactoside.

The isoform Long is expressed exclusively in the small intestine.

The protein localises to the cytoplasm. The protein resides in the nucleus. It is found in the secreted. Functionally, binds galactosides. Has high affinity for the Forssman pentasaccharide. Ligand for HAVCR2/TIM3. Binding to HAVCR2 induces T-helper type 1 lymphocyte (Th1) death. Also stimulates bactericidal activity in infected macrophages by causing macrophage activation and IL1B secretion which restricts intracellular bacterial growth. Ligand for P4HB; the interaction retains P4HB at the cell surface of Th2 T helper cells, increasing disulfide reductase activity at the plasma membrane, altering the plasma membrane redox state and enhancing cell migration. Ligand for CD44; the interaction enhances binding of SMAD3 to the FOXP3 promoter, leading to up-regulation of FOXP3 expression and increased induced regulatory T (iTreg) cell stability and suppressive function. Promotes ability of mesenchymal stromal cells to suppress T-cell proliferation. Expands regulatory T-cells and induces cytotoxic T-cell apoptosis following virus infection. Activates ERK1/2 phosphorylation inducing cytokine (IL-6, IL-8, IL-12) and chemokine (CCL2) production in mast and dendritic cells. Inhibits degranulation and induces apoptosis of mast cells. Induces maturation and migration of dendritic cells. Inhibits natural killer (NK) cell function. Can transform NK cell phenotype from peripheral to decidual during pregnancy. Astrocyte derived galectin-9 enhances microglial TNF production. May play a role in thymocyte-epithelial interactions relevant to the biology of the thymus. May provide the molecular basis for urate flux across cell membranes, allowing urate that is formed during purine metabolism to efflux from cells and serving as an electrogenic transporter that plays an important role in renal and gastrointestinal urate excretion. Highly selective to the anion urate. This Rattus norvegicus (Rat) protein is Galectin-9 (Lgals9).